The primary structure comprises 235 residues: 2-C-methyl-D-erythritol 4-phosphate cytidylyltransferase (235 aa).

It belongs to the IspD/TarI cytidylyltransferase family. IspD subfamily.

The enzyme catalyses 2-C-methyl-D-erythritol 4-phosphate + CTP + H(+) = 4-CDP-2-C-methyl-D-erythritol + diphosphate. Its pathway is isoprenoid biosynthesis; isopentenyl diphosphate biosynthesis via DXP pathway; isopentenyl diphosphate from 1-deoxy-D-xylulose 5-phosphate: step 2/6. Its function is as follows. Catalyzes the formation of 4-diphosphocytidyl-2-C-methyl-D-erythritol from CTP and 2-C-methyl-D-erythritol 4-phosphate (MEP). The protein is 2-C-methyl-D-erythritol 4-phosphate cytidylyltransferase of Pseudomonas entomophila (strain L48).